We begin with the raw amino-acid sequence, 182 residues long: MKQLLDFLPLVIFFAVYKMYDIYIASGALIAATALQLIVTYALYKKIEKMHLITFVMVTFFGTLTLIFHDDAFIKWKVTVVYALFAIALAVSQLLNKPILKSMLGKELVVADKIWAHVTWYWVSFFVACGLVNIYVAFSLSQETWVNFKVFGLTALTLINTVITVVYLFKNMPEEHKKELNK.

Transmembrane regions (helical) follow at residues 22–42 (IYIA…VTYA), 50–70 (MHLI…IFHD), 72–92 (AFIK…LAVS), 118–138 (VTWY…YVAF), and 148–168 (FKVF…VVYL).

This sequence belongs to the YciB family.

Its subcellular location is the cell inner membrane. Its function is as follows. Plays a role in cell envelope biogenesis, maintenance of cell envelope integrity and membrane homeostasis. The sequence is that of Inner membrane-spanning protein YciB from Shewanella woodyi (strain ATCC 51908 / MS32).